The sequence spans 312 residues: 4-hydroxyproline 2-epimerase (312 aa).

Catalysis depends on Cys88, which acts as the Proton acceptor. Substrate is bound by residues 89–90 (GH), His208, and Asp234. Cys238 (proton donor) is an active-site residue. 239-240 (GT) lines the substrate pocket.

This sequence belongs to the proline racemase family.

It carries out the reaction trans-4-hydroxy-L-proline = cis-4-hydroxy-D-proline. Catalyzes the epimerization of trans-4-hydroxy-L-proline (t4LHyp) to cis-4-hydroxy-D-proline (c4DHyp). Is likely involved in a degradation pathway that converts t4LHyp to alpha-ketoglutarate. Can also catalyze the epimerization of trans-3-hydroxy-L-proline (t3LHyp) to cis-3-hydroxy-D-proline (c3DHyp), albeit with 500-fold lower efficiency. Displays no proline racemase activity. The protein is 4-hydroxyproline 2-epimerase of Xanthomonas campestris pv. campestris (strain ATCC 33913 / DSM 3586 / NCPPB 528 / LMG 568 / P 25).